Reading from the N-terminus, the 922-residue chain is DNA gyrase subunit A (922 aa).

Residues 1–14 (MTETPTDGGSTPPS) show a composition bias toward low complexity. The interval 1-24 (MTETPTDGGSTPPSDGGGPGGRIE) is disordered. In terms of domain architecture, Topo IIA-type catalytic spans 49–518 (LPDVRDGLKP…ADGDLSMEDL (470 aa)). The active-site O-(5'-phospho-DNA)-tyrosine intermediate is Tyr137. A GyrA-box motif is present at residues 545-551 (QRRGGKG). The tract at residues 861 to 922 (EANGDDELDE…TEPDPGESDG (62 aa)) is disordered. Acidic residues-rich tracts occupy residues 863–890 (NGDD…DESA) and 912–922 (DTEPDPGESDG).

This sequence belongs to the type II topoisomerase GyrA/ParC subunit family. Heterotetramer, composed of two GyrA and two GyrB chains. In the heterotetramer, GyrA contains the active site tyrosine that forms a transient covalent intermediate with DNA, while GyrB binds cofactors and catalyzes ATP hydrolysis.

It localises to the cytoplasm. The catalysed reaction is ATP-dependent breakage, passage and rejoining of double-stranded DNA.. A type II topoisomerase that negatively supercoils closed circular double-stranded (ds) DNA in an ATP-dependent manner to modulate DNA topology and maintain chromosomes in an underwound state. Negative supercoiling favors strand separation, and DNA replication, transcription, recombination and repair, all of which involve strand separation. Also able to catalyze the interconversion of other topological isomers of dsDNA rings, including catenanes and knotted rings. Type II topoisomerases break and join 2 DNA strands simultaneously in an ATP-dependent manner. The protein is DNA gyrase subunit A of Nocardioides sp. (strain ATCC BAA-499 / JS614).